The following is a 901-amino-acid chain: Protein translocase subunit SecA (901 aa).

ATP is bound by residues Gln-87, 105-109 (GEGKT), and Asp-512. Zn(2+) contacts are provided by Cys-885, Cys-887, Cys-896, and His-897.

The protein belongs to the SecA family. Monomer and homodimer. Part of the essential Sec protein translocation apparatus which comprises SecA, SecYEG and auxiliary proteins SecDF-YajC and YidC. Zn(2+) is required as a cofactor.

It localises to the cell inner membrane. The protein localises to the cytoplasm. It catalyses the reaction ATP + H2O + cellular proteinSide 1 = ADP + phosphate + cellular proteinSide 2.. Its function is as follows. Part of the Sec protein translocase complex. Interacts with the SecYEG preprotein conducting channel. Has a central role in coupling the hydrolysis of ATP to the transfer of proteins into and across the cell membrane, serving both as a receptor for the preprotein-SecB complex and as an ATP-driven molecular motor driving the stepwise translocation of polypeptide chains across the membrane. The chain is Protein translocase subunit SecA from Salmonella typhi.